We begin with the raw amino-acid sequence, 248 residues long: Granzyme F (248 aa).

An N-terminal signal peptide occupies residues 1 to 18 (MPPILILLTLLLPLRAGA). Positions 19–20 (EE) are excised as a propeptide. The region spanning 21-246 (IIGGHEVKPH…YLPWISRNMK (226 aa)) is the Peptidase S1 domain. A disulfide bridge links C50 with C66. H65 serves as the catalytic Charge relay system. N-linked (GlcNAc...) asparagine glycosylation is present at N106. Residue D109 is the Charge relay system of the active site. 2 disulfide bridges follow: C143-C210 and C175-C189. N154 is a glycosylation site (N-linked (GlcNAc...) asparagine). The active-site Charge relay system is the S204. The N-linked (GlcNAc...) asparagine glycan is linked to N223.

The protein belongs to the peptidase S1 family. Granzyme subfamily.

The protein resides in the cytolytic granule. This enzyme is probably necessary for target cell lysis in cell-mediated immune responses. This Mus musculus (Mouse) protein is Granzyme F (Gzmf).